Consider the following 198-residue polypeptide: Large ribosomal subunit protein bL27c (198 aa).

Residues M1–S58 constitute a chloroplast transit peptide.

The protein belongs to the bacterial ribosomal protein bL27 family. Part of the 50S ribosomal subunit.

Its subcellular location is the plastid. The protein resides in the chloroplast. The protein is Large ribosomal subunit protein bL27c (RPL27) of Arabidopsis thaliana (Mouse-ear cress).